Reading from the N-terminus, the 304-residue chain is Coenzyme PQQ synthesis protein B (304 aa).

This sequence belongs to the PqqB family.

It functions in the pathway cofactor biosynthesis; pyrroloquinoline quinone biosynthesis. Its function is as follows. May be involved in the transport of PQQ or its precursor to the periplasm. The chain is Coenzyme PQQ synthesis protein B from Ectopseudomonas mendocina (strain ymp) (Pseudomonas mendocina).